Consider the following 862-residue polypeptide: Protein translocase subunit SecA (862 aa).

ATP is bound by residues Gln88, 106 to 110, and Asp506; that span reads GEGKT. Residues Cys839, Cys841, Cys850, and His851 each coordinate Zn(2+).

It belongs to the SecA family. In terms of assembly, monomer and homodimer. Part of the essential Sec protein translocation apparatus which comprises SecA, SecYEG and auxiliary proteins SecDF-YajC and YidC. Zn(2+) serves as cofactor.

Its subcellular location is the cell inner membrane. It is found in the cytoplasm. It carries out the reaction ATP + H2O + cellular proteinSide 1 = ADP + phosphate + cellular proteinSide 2.. Part of the Sec protein translocase complex. Interacts with the SecYEG preprotein conducting channel. Has a central role in coupling the hydrolysis of ATP to the transfer of proteins into and across the cell membrane, serving as an ATP-driven molecular motor driving the stepwise translocation of polypeptide chains across the membrane. This chain is Protein translocase subunit SecA, found in Campylobacter jejuni subsp. doylei (strain ATCC BAA-1458 / RM4099 / 269.97).